Consider the following 128-residue polypeptide: Small ribosomal subunit protein uS11 (128 aa).

Belongs to the universal ribosomal protein uS11 family. In terms of assembly, part of the 30S ribosomal subunit. Interacts with proteins S7 and S18. Binds to IF-3.

Functionally, located on the platform of the 30S subunit, it bridges several disparate RNA helices of the 16S rRNA. Forms part of the Shine-Dalgarno cleft in the 70S ribosome. The chain is Small ribosomal subunit protein uS11 from Aster yellows witches'-broom phytoplasma (strain AYWB).